A 247-amino-acid chain; its full sequence is NAD-dependent protein deacetylase (247 aa).

Positions 1 to 247 (MDTRKNLKEL…LGGIVEELGY (247 aa)) constitute a Deacetylase sirtuin-type domain. NAD(+) is bound by residues Ala23, Thr27, Phe34, Arg35, Gln104, Ile106, Asp107, and His122. Phe34 lines the nicotinamide pocket. The nicotinamide site is built by Ile106 and Asp107. His122 (proton acceptor) is an active-site residue. Zn(2+)-binding residues include Cys130, Cys133, Cys152, and Cys155. NAD(+) is bound by residues Thr193, Ser194, Asn216, and Ile234.

It belongs to the sirtuin family. Class U subfamily. Zn(2+) serves as cofactor.

Its subcellular location is the cytoplasm. The catalysed reaction is N(6)-acetyl-L-lysyl-[protein] + NAD(+) + H2O = 2''-O-acetyl-ADP-D-ribose + nicotinamide + L-lysyl-[protein]. In terms of biological role, NAD-dependent protein deacetylase which modulates the activities of several enzymes which are inactive in their acetylated form. In Clostridium tetani (strain Massachusetts / E88), this protein is NAD-dependent protein deacetylase.